The chain runs to 434 residues: Methylenetetrahydrofolate--tRNA-(uracil-5-)-methyltransferase TrmFO (434 aa).

G9–G14 provides a ligand contact to FAD.

This sequence belongs to the MnmG family. TrmFO subfamily. FAD serves as cofactor.

It localises to the cytoplasm. The enzyme catalyses uridine(54) in tRNA + (6R)-5,10-methylene-5,6,7,8-tetrahydrofolate + NADH + H(+) = 5-methyluridine(54) in tRNA + (6S)-5,6,7,8-tetrahydrofolate + NAD(+). It carries out the reaction uridine(54) in tRNA + (6R)-5,10-methylene-5,6,7,8-tetrahydrofolate + NADPH + H(+) = 5-methyluridine(54) in tRNA + (6S)-5,6,7,8-tetrahydrofolate + NADP(+). Catalyzes the folate-dependent formation of 5-methyl-uridine at position 54 (M-5-U54) in all tRNAs. The sequence is that of Methylenetetrahydrofolate--tRNA-(uracil-5-)-methyltransferase TrmFO from Bacillus pumilus (strain SAFR-032).